The chain runs to 580 residues: Micronemal protein 4 (580 aa).

A signal peptide spans 1–25 (MRASLPVHLVVCTQLSAVWFGVAKA). 6 consecutive Apple domains span residues 68–137 (CVHS…SRSC), 141–214 (CFEQ…KQFC), 232–301 (CIQL…PKSC), 305–375 (CFSN…VTVG), 419–488 (CVHT…SRTC), and 492–565 (CLRR…YTFC). Intrachain disulfides connect Cys68/Cys137, Cys93/Cys115, Cys97/Cys103, Cys141/Cys214, Cys166/Cys188, Cys170/Cys176, Cys232/Cys301, Cys257/Cys279, Cys261/Cys267, Cys305/Cys380, Cys332/Cys354, Cys336/Cys342, Cys419/Cys488, Cys444/Cys466, and Cys448/Cys454.

Monomer. Part of the MIC6-MIC1-MIC4 complex. Interacts (via the second apple domain) directly with MIC1 (via the beta-finger region). Interacts with murine TLR2; the interaction promotes activation of bone marrow-derived dendritic cells and macrophages in the host. Interacts with murine TLR4; the interaction promotes activation of bone marrow-derived dendritic cells and macrophages in the host. Proteolytically cleaved at the N- and C-terminus after release from the microneme.

It localises to the cytoplasmic vesicle. It is found in the secretory vesicle. The protein localises to the microneme. The protein resides in the host early endosome. With respect to regulation, lacto-N-biose inhibits binding to asialofetuin, a host glycoprotein. Soluble adhesin with carbohydrate-binding activity. Binds to galactose-terminating oligosaccharides. Required for attachment of the parasite to the host cell prior to invasion. Triggers the activation of murine bone marrow-derived dendritic cells and macrophages and production of pro-inflammatory cytokines, such as IL12 (IL12B/IL12A), in host TLR2/TLR4-dependent manner. Triggers the production of anti-inflammatory cytokine IL10 in murine bone marrow-derived macrophages in host TLR4-dependent manner. Induces transient endotoxin tolerance in murine bone marrow-derived macrophages, manifested by reduced TNF-alpha (TNF) production in response to challenge with lipopolysaccharides (LPS). The polypeptide is Micronemal protein 4 (Toxoplasma gondii).